A 299-amino-acid chain; its full sequence is dTDP-4-dehydrorhamnose reductase (299 aa).

NADH is bound by residues 10 to 12, aspartate 30, 39 to 40, and 63 to 65; these read GQV, DF, and AHT. 11–12 is a binding site for NADPH; sequence QV. NADPH contacts are provided by residues 39–40, 63–65, and tyrosine 102; these read DF and AHT. Position 104-105 (104-105) interacts with dTDP-beta-L-rhamnose; that stretch reads TD. NADH is bound by residues tyrosine 128 and lysine 132. Residues tyrosine 128 and lysine 132 each coordinate NADPH. Tyrosine 128 functions as the Proton donor/acceptor in the catalytic mechanism. Tryptophan 153 provides a ligand contact to dTDP-beta-L-rhamnose.

It belongs to the dTDP-4-dehydrorhamnose reductase family. Homodimer. It depends on Mg(2+) as a cofactor.

The enzyme catalyses dTDP-beta-L-rhamnose + NADP(+) = dTDP-4-dehydro-beta-L-rhamnose + NADPH + H(+). It participates in carbohydrate biosynthesis; dTDP-L-rhamnose biosynthesis. Its pathway is bacterial outer membrane biogenesis; LPS O-antigen biosynthesis. Involved in the biosynthesis of the dTDP-L-rhamnose which is an important component of lipopolysaccharide (LPS). Catalyzes the reduction of dTDP-6-deoxy-L-lyxo-4-hexulose to yield dTDP-L-rhamnose. RmlD uses NADH and NADPH nearly equally well. This Salmonella typhimurium (strain LT2 / SGSC1412 / ATCC 700720) protein is dTDP-4-dehydrorhamnose reductase (rfbD).